A 443-amino-acid polypeptide reads, in one-letter code: Exodeoxyribonuclease 7 large subunit (443 aa).

The protein belongs to the XseA family. As to quaternary structure, heterooligomer composed of large and small subunits.

The protein localises to the cytoplasm. It carries out the reaction Exonucleolytic cleavage in either 5'- to 3'- or 3'- to 5'-direction to yield nucleoside 5'-phosphates.. Bidirectionally degrades single-stranded DNA into large acid-insoluble oligonucleotides, which are then degraded further into small acid-soluble oligonucleotides. This is Exodeoxyribonuclease 7 large subunit from Legionella pneumophila (strain Corby).